The sequence spans 125 residues: Small ribosomal subunit protein eS26 (125 aa).

It belongs to the eukaryotic ribosomal protein eS26 family.

The protein is Small ribosomal subunit protein eS26 (RPS26) of Sterkiella nova (Ciliate).